A 262-amino-acid chain; its full sequence is Serine/arginine-rich SC35-like splicing factor SCL30 (262 aa).

Over residues 1–14 (MRRYSPPYYSPPRR) the composition is skewed to low complexity. 2 disordered regions span residues 1-48 (MRRY…SHGS) and 123-262 (ASES…VSPR). Phosphoserine occurs at positions 5, 10, and 22. Positions 31 to 42 (GYGGGGGGGGRR) are enriched in gly residues. An RRM domain is found at 47–125 (GSLLVRNIPL…REITVVVASE (79 aa)). Positions 125–152 (ESRKRPEEMRVKTRTRSREPSGSRDRSH) are enriched in basic and acidic residues. Over residues 153-167 (GRSRSRSISRSRSPR) the composition is skewed to basic residues. A phosphoserine mark is found at Ser182, Ser204, and Ser206. Tyr209 carries the phosphotyrosine modification. The segment covering 217-239 (PDRDRNGDNEIREKPGYEAEDRR) has biased composition (basic and acidic residues). The segment covering 243-262 (RAVSRSPSGSRSRSVEVSPR) has biased composition (low complexity). A phosphoserine mark is found at Ser254, Ser256, and Ser260.

Belongs to the splicing factor SR family. SCL subfamily. In terms of assembly, component of the spliceosome. Interacts with RS2Z33, CYP59, CYP63 and CYP95. Phosphorylated.

It localises to the nucleus speckle. Involved in intron recognition and spliceosome assembly. Probably active at the 5' splice sites. This chain is Serine/arginine-rich SC35-like splicing factor SCL30 (SCL30), found in Arabidopsis thaliana (Mouse-ear cress).